We begin with the raw amino-acid sequence, 193 residues long: Ion-translocating oxidoreductase complex subunit A (193 aa).

6 consecutive transmembrane segments (helical) span residues 5–25, 39–59, 62–82, 102–122, 134–154, and 171–191; these read LLLF…FLGL, IGMG…SWLM, FILV…LVIA, LLGI…VALL, AVYG…FAAI, and SIGL…SGLV.

This sequence belongs to the NqrDE/RnfAE family. In terms of assembly, the complex is composed of six subunits: RnfA, RnfB, RnfC, RnfD, RnfE and RnfG.

The protein resides in the cell inner membrane. Part of a membrane-bound complex that couples electron transfer with translocation of ions across the membrane. The polypeptide is Ion-translocating oxidoreductase complex subunit A (Proteus mirabilis (strain HI4320)).